The sequence spans 129 residues: Small ribosomal subunit protein uS11 (129 aa).

The protein belongs to the universal ribosomal protein uS11 family. In terms of assembly, part of the 30S ribosomal subunit. Interacts with proteins S7 and S18. Binds to IF-3.

Functionally, located on the platform of the 30S subunit, it bridges several disparate RNA helices of the 16S rRNA. Forms part of the Shine-Dalgarno cleft in the 70S ribosome. The sequence is that of Small ribosomal subunit protein uS11 from Aeromonas hydrophila subsp. hydrophila (strain ATCC 7966 / DSM 30187 / BCRC 13018 / CCUG 14551 / JCM 1027 / KCTC 2358 / NCIMB 9240 / NCTC 8049).